The sequence spans 687 residues: Chloride channel protein ClC-Kb (687 aa).

Residues 1 to 50 (MEELVGLREGASKKPVPLQELWGPCPRIRRNIQGGLEWLKERLFRVGEDW) lie on the Cytoplasmic side of the membrane. 2 helical membrane-spanning segments follow: residues 51–82 (YFLV…KWLY) and 91–111 (LRYL…SGFS). Positions 116 to 127 (PSSGGSGIPEVK) form an intramembrane region, helical. S121 contacts chloride. Transmembrane regions (helical) follow at residues 141 to 160 (IKNF…TGST) and 161 to 180 (IFLG…AAYL). The helical intramembrane region spans 203–224 (AGAAVGVATVFAAPISGVLFSI). The helical transmembrane segment at 236–255 (YWRGFFAATCGAFMFHLLAV) threads the bilayer. Positions 259, 261, 278, and 281 each coordinate Ca(2+). Transmembrane regions (helical) follow at residues 282–310 (IFFF…LFFL) and 325–342 (PLYS…TYPP). Positions 349–360 (ASRLSMSEHLET) form an intramembrane region, helical. 2 helical membrane passes run 400-420 (GTLV…TTIP) and 421-440 (IPAG…GRLF). F426 contacts chloride. Residues 464 to 496 (GAYALAGAAAFSGAVTHTLSTALLAFEVTGQLV) constitute an intramembrane region (helical). A helical membrane pass occupies residues 500–520 (PVLMAVLAANAISQSFQPSFY). The Cytoplasmic portion of the chain corresponds to 521–687 (DGTIIVKKLP…STLTNPPAPK (167 aa)). 2 consecutive CBS domains span residues 551 to 609 (MNCA…EPAS) and 626 to 687 (CPTQ…PAPK).

This sequence belongs to the chloride channel (TC 2.A.49) family. CLCNKB subfamily. Homodimer. Interacts with BSND. Post-translationally, N-glycosylated. As to expression, specifically expressed in the kidney, predominantly in the outer medulla and cortex. All nephron segments expressing BSND also express CLCNK proteins.

It localises to the basolateral cell membrane. It carries out the reaction chloride(in) = chloride(out). It catalyses the reaction iodide(out) = iodide(in). The enzyme catalyses nitrate(in) = nitrate(out). The catalysed reaction is bromide(in) = bromide(out). Anion-selective channel permeable to small monovalent anions with ion selectivity for chloride &gt; bromide &gt; nitrate &gt; iodide. Forms a homodimeric channel where each subunit has its own ion conduction pathway. May conduct double-barreled currents controlled by two types of gates, two fast gates that control each subunit independently and a slow common gate that opens and shuts off both subunits simultaneously. Assembles with the regulatory subunit BSND/Barttin for sorting at the basolateral plasma membrane domain and functional switch to the ion conducting state. CLCNKB:BSND channels display mostly a linear current-voltage relationship controlled by common gate. Mediates chloride conductance along nephron segments, namely the thick ascending limb of Henle's loop, convoluted tubule and the collecting duct, contributing to the maintenance of systemic acid-base and electrolyte homeostasis. Conducts chloride currents in the stria vascularis of the inner ear to establish the endocochlear potential necessary for normal hearing. The polypeptide is Chloride channel protein ClC-Kb (Mus musculus (Mouse)).